A 533-amino-acid polypeptide reads, in one-letter code: Probable nucleolar protein 5-1 (533 aa).

One can recognise a Nop domain in the interval 280-398 (IAPNLTALVG…LEARLRTLEG (119 aa)). The disordered stretch occupies residues 402 to 533 (GRLSGSAKGK…EKKKKKKTEV (132 aa)). The segment covering 412–423 (PKIEVYDKDKKK) has biased composition (basic and acidic residues). Positions 433 to 450 (KTYNTAADSLLQTPTVDS) are enriched in polar residues. Composition is skewed to basic and acidic residues over residues 474-489 (TEEP…KTEA) and 515-524 (MPAKKKEKSE).

This sequence belongs to the NOP5/NOP56 family.

The protein resides in the nucleus. It localises to the nucleolus. Functionally, required for 60S ribosomal subunit biogenesis. The sequence is that of Probable nucleolar protein 5-1 (NOP5-1) from Arabidopsis thaliana (Mouse-ear cress).